Here is a 93-residue protein sequence, read N- to C-terminus: Small integral membrane protein 36 (93 aa).

The chain crosses the membrane as a helical span at residues 14–34; it reads LIILVASYVILLLVFLVSCVL. The disordered stretch occupies residues 70-93; the sequence is SHWARGPSLHLKDPAPLGKKSTVV.

Its subcellular location is the membrane. The chain is Small integral membrane protein 36 from Mus musculus (Mouse).